The primary structure comprises 344 residues: GDSL esterase/lipase At5g03590 (344 aa).

The first 19 residues, 1–19 (MHYLMKLFFSLSLFFGING), serve as a signal peptide directing secretion. Serine 41 functions as the Nucleophile in the catalytic mechanism. N-linked (GlcNAc...) asparagine glycans are attached at residues asparagine 126, asparagine 227, and asparagine 238. Aspartate 318 is an active-site residue.

The protein belongs to the 'GDSL' lipolytic enzyme family.

Its subcellular location is the secreted. This Arabidopsis thaliana (Mouse-ear cress) protein is GDSL esterase/lipase At5g03590.